We begin with the raw amino-acid sequence, 147 residues long: Hemoglobin subunit beta (147 aa).

One can recognise a Globin domain in the interval 3-147 (HWTPEEKQYI…VAHALALGYH (145 aa)). Residues His64 and His93 each contribute to the heme b site.

The protein belongs to the globin family. As to quaternary structure, heterotetramer of two alpha-D chains and two beta chains. Red blood cells.

In terms of biological role, involved in oxygen transport from the lung to the various peripheral tissues. The chain is Hemoglobin subunit beta (HBB) from Chelonoidis niger (Galapagos giant tortoise).